The chain runs to 404 residues: Cysteine desulfurase IscS (404 aa).

Pyridoxal 5'-phosphate is bound by residues Ala-75–Thr-76, Asn-155, Gln-183, and Ser-203–His-205. N6-(pyridoxal phosphate)lysine is present on Lys-206. Residue Thr-243 coordinates pyridoxal 5'-phosphate. The active-site Cysteine persulfide intermediate is the Cys-328. Cys-328 is a [2Fe-2S] cluster binding site.

It belongs to the class-V pyridoxal-phosphate-dependent aminotransferase family. NifS/IscS subfamily. Homodimer. Forms a heterotetramer with IscU, interacts with other sulfur acceptors. Pyridoxal 5'-phosphate serves as cofactor.

It localises to the cytoplasm. The catalysed reaction is (sulfur carrier)-H + L-cysteine = (sulfur carrier)-SH + L-alanine. The protein operates within cofactor biosynthesis; iron-sulfur cluster biosynthesis. Master enzyme that delivers sulfur to a number of partners involved in Fe-S cluster assembly, tRNA modification or cofactor biosynthesis. Catalyzes the removal of elemental sulfur atoms from cysteine to produce alanine. Functions as a sulfur delivery protein for Fe-S cluster synthesis onto IscU, an Fe-S scaffold assembly protein, as well as other S acceptor proteins. This chain is Cysteine desulfurase IscS, found in Histophilus somni (strain 129Pt) (Haemophilus somnus).